Consider the following 585-residue polypeptide: Voltage-gated potassium channel KCNC1 (585 aa).

Topologically, residues 1–190 are cytoplasmic; it reads MGQGDESERI…EDPYSSRYAR (190 aa). A Phosphoserine modification is found at serine 44. The Zn(2+) site is built by histidine 77, cysteine 83, cysteine 104, and cysteine 105. Residues 121–147 are disordered; sequence SFGGAPLDNSADDADADGPGDSGDGED. Residues serine 130, serine 142, serine 158, and serine 160 each carry the phosphoserine modification. Acidic residues predominate over residues 130–147; sequence SADDADADGPGDSGDGED. Residues 191–209 traverse the membrane as a helical segment; sequence YVAFASLFFILVSITTFCL. Residues asparagine 220 and asparagine 229 are each glycosylated (N-linked (GlcNAc...) asparagine). A helical transmembrane segment spans residues 248 to 267; sequence IEGVCVVWFTFEFLMRVVFC. The Cytoplasmic portion of the chain corresponds to 268–276; it reads PNKVEFIKN. The helical transmembrane segment at 277–295 threads the bilayer; sequence SLNIIDFVAILPFYLEVGL. The chain crosses the membrane as a helical; Voltage-sensor span at residues 309-331; the sequence is FLRVVRFVRILRIFKLTRHFVGL. Over 332 to 344 the chain is Cytoplasmic; the sequence is RVLGHTLRASTNE. Residues 345–366 traverse the membrane as a helical segment; it reads FLLLIIFLALGVLIFATMIYYA. K(+) is bound by residues threonine 400, leucine 401, glycine 402, and tyrosine 403. Positions 400–405 match the Selectivity filter motif; the sequence is TLGYGD. The helical transmembrane segment at 415-436 threads the bilayer; sequence LVGALCALAGVLTIAMPVPVIV. The Cytoplasmic segment spans residues 437-585; sequence NNFGMYYSLA…YMPTEAVRVT (149 aa). Serine 474 is subject to Phosphoserine. Threonine 483 carries the post-translational modification Phosphothreonine.

This sequence belongs to the potassium channel family. C (Shaw) (TC 1.A.1.2) subfamily. Kv3.1/KCNC1 sub-subfamily. In terms of assembly, homotetramer. Homomultimer. Heteromultimer with KCNG3, KCNG4 and KCNV2. Heteromultimer with KCNC2. Heterotetramer with KCNC3. Interacts with the ancillary subunits KCNE1 and KCNE2; the interaction modulates channel activity. Post-translationally, N-glycosylated; contains sialylated glycans. In terms of tissue distribution, expressed in brain. Expressed in globus pallidal neurons of the basal ganglia (at protein level). Detected on Purkinje cells in the cerebellum molecular layer (at protein level).

It is found in the cell membrane. The protein resides in the cell projection. Its subcellular location is the axon. The protein localises to the presynaptic cell membrane. It catalyses the reaction K(+)(in) = K(+)(out). Voltage-gated potassium channel that opens in response to the voltage difference across the membrane and through which potassium ions pass in accordance with their electrochemical gradient. The mechanism is time-dependent and inactivation is slow. Plays an important role in the rapid repolarization of fast-firing brain neurons. Can form functional homotetrameric channels and heterotetrameric channels that contain variable proportions of KCNC2, and possibly other family members as well. Contributes to fire sustained trains of very brief action potentials at high frequency in pallidal neurons. The chain is Voltage-gated potassium channel KCNC1 from Rattus norvegicus (Rat).